The sequence spans 135 residues: Race-specific elicitor A4 (135 aa).

The first 18 residues, 1-18 (MHYTTLLLSTLLVGTALA), serve as a signal peptide directing secretion. A propeptide spanning residues 19-29 (QPTNPPAKTPK) is cleaved from the precursor. The disordered stretch occupies residues 19–39 (QPTNPPAKTPKKAPKTQPYNP). Positions 47–111 (DTKCMGPKDC…DYPNLSTCPV (65 aa)) constitute a Chitin-binding type-2 domain. Cys-86 and Cys-101 are disulfide-bonded. The tract at residues 112 to 135 (KTPQPKPKKGGVGGKKASVGHPGY) is disordered.

Its function is as follows. This necrosis-inducing peptide induces a hypersensitive response on Cf-4 tomato genotypes. Race-specific elicitors are compounds which only induce defense responses in genotypes of host plants which are resistant to the pathogenic race that produces the elicitor, but not in susceptible genotypes. The polypeptide is Race-specific elicitor A4 (AVR4) (Passalora fulva (Tomato leaf mold)).